The primary structure comprises 613 residues: DNA mismatch repair protein MutL (613 aa).

Belongs to the DNA mismatch repair MutL/HexB family.

Functionally, this protein is involved in the repair of mismatches in DNA. It is required for dam-dependent methyl-directed DNA mismatch repair. May act as a 'molecular matchmaker', a protein that promotes the formation of a stable complex between two or more DNA-binding proteins in an ATP-dependent manner without itself being part of a final effector complex. The chain is DNA mismatch repair protein MutL from Flavobacterium psychrophilum (strain ATCC 49511 / DSM 21280 / CIP 103535 / JIP02/86).